We begin with the raw amino-acid sequence, 145 residues long: Leptin (145 aa).

Cysteines 95 and 145 form a disulfide.

Belongs to the leptin family.

It localises to the secreted. In terms of biological role, key player in the regulation of energy balance and body weight control. Once released into the circulation, has central and peripheral effects by binding LEPR, found in many tissues, which results in the activation of several major signaling pathways. The polypeptide is Leptin (LEP) (Meleagris gallopavo (Wild turkey)).